The sequence spans 178 residues: MNLKAKILDDKAMQRTLTRIAHEIIEKNKGIDDIVLVGIKRRGVPIADRIADIIEEIEGSKVKLGKVDITLYRDDLSTVSSQPIVKDEEVYEDVKDKVVILVDDVLYTGRTCRAAIEAIMHRGRPKMIQLAVLIDRGHRELPIRADYVGKNVPTSKSELISVNVKGIDEEDSVNIYEL.

Residues 41 to 42, 103 to 111, and R136 each bind substrate; these read RR and DDVLYTGRT. A PRPP-binding motif is present at residues 99-111; sequence VILVDDVLYTGRT.

This sequence belongs to the purine/pyrimidine phosphoribosyltransferase family. PyrR subfamily. As to quaternary structure, homodimer and homohexamer; in equilibrium.

The catalysed reaction is UMP + diphosphate = 5-phospho-alpha-D-ribose 1-diphosphate + uracil. Regulates transcriptional attenuation of the pyrimidine nucleotide (pyr) operon by binding in a uridine-dependent manner to specific sites on pyr mRNA. This disrupts an antiterminator hairpin in the RNA and favors formation of a downstream transcription terminator, leading to a reduced expression of downstream genes. In terms of biological role, also displays a weak uracil phosphoribosyltransferase activity which is not physiologically significant. This Clostridium acetobutylicum (strain ATCC 824 / DSM 792 / JCM 1419 / IAM 19013 / LMG 5710 / NBRC 13948 / NRRL B-527 / VKM B-1787 / 2291 / W) protein is Bifunctional protein PyrR.